A 238-amino-acid chain; its full sequence is Orotidine 5'-phosphate decarboxylase (238 aa).

Residues aspartate 11, lysine 32, 59-68 (DLKFHDIPNT), threonine 123, arginine 185, glutamine 194, glycine 214, and arginine 215 contribute to the substrate site. The Proton donor role is filled by lysine 61.

Belongs to the OMP decarboxylase family. Type 1 subfamily. As to quaternary structure, homodimer.

It catalyses the reaction orotidine 5'-phosphate + H(+) = UMP + CO2. It participates in pyrimidine metabolism; UMP biosynthesis via de novo pathway; UMP from orotate: step 2/2. Its function is as follows. Catalyzes the decarboxylation of orotidine 5'-monophosphate (OMP) to uridine 5'-monophosphate (UMP). In Nostoc sp. (strain PCC 7120 / SAG 25.82 / UTEX 2576), this protein is Orotidine 5'-phosphate decarboxylase.